The chain runs to 216 residues: 3-isopropylmalate dehydratase small subunit (216 aa).

It belongs to the LeuD family. LeuD type 1 subfamily. In terms of assembly, heterodimer of LeuC and LeuD.

It catalyses the reaction (2R,3S)-3-isopropylmalate = (2S)-2-isopropylmalate. Its pathway is amino-acid biosynthesis; L-leucine biosynthesis; L-leucine from 3-methyl-2-oxobutanoate: step 2/4. In terms of biological role, catalyzes the isomerization between 2-isopropylmalate and 3-isopropylmalate, via the formation of 2-isopropylmaleate. The chain is 3-isopropylmalate dehydratase small subunit from Acinetobacter baylyi (strain ATCC 33305 / BD413 / ADP1).